The primary structure comprises 639 residues: Chaperone protein DnaK (639 aa).

Threonine 198 carries the phosphothreonine; by autocatalysis modification. Residues 602–639 (QAKSQAQGGDNADAGKQANATADDVVDAEFEEVKDDKK) form a disordered region. The segment covering 625-639 (DVVDAEFEEVKDDKK) has biased composition (acidic residues).

The protein belongs to the heat shock protein 70 family.

Functionally, acts as a chaperone. This is Chaperone protein DnaK from Shewanella baltica (strain OS195).